The chain runs to 212 residues: Adapter protein MecA 2 (212 aa).

The protein belongs to the MecA family. As to quaternary structure, homodimer.

Enables the recognition and targeting of unfolded and aggregated proteins to the ClpC protease or to other proteins involved in proteolysis. Acts negatively in the development of competence by binding ComK and recruiting it to the ClpCP protease. When overexpressed, inhibits sporulation. Also involved in Spx degradation by ClpC. This chain is Adapter protein MecA 2 (mecA2), found in Halalkalibacterium halodurans (strain ATCC BAA-125 / DSM 18197 / FERM 7344 / JCM 9153 / C-125) (Bacillus halodurans).